A 209-amino-acid polypeptide reads, in one-letter code: Molybdenum cofactor guanylyltransferase (209 aa).

Residues 13–15 (LAG), lysine 26, asparagine 54, aspartate 74, and aspartate 104 each bind GTP. Aspartate 104 is a Mg(2+) binding site.

It belongs to the MobA family. Monomer. Mg(2+) serves as cofactor.

It localises to the cytoplasm. The enzyme catalyses Mo-molybdopterin + GTP + H(+) = Mo-molybdopterin guanine dinucleotide + diphosphate. Transfers a GMP moiety from GTP to Mo-molybdopterin (Mo-MPT) cofactor (Moco or molybdenum cofactor) to form Mo-molybdopterin guanine dinucleotide (Mo-MGD) cofactor. This is Molybdenum cofactor guanylyltransferase from Acinetobacter baumannii (strain ATCC 17978 / DSM 105126 / CIP 53.77 / LMG 1025 / NCDC KC755 / 5377).